A 418-amino-acid polypeptide reads, in one-letter code: Glutamyl-tRNA reductase (418 aa).

Substrate-binding positions include 49–52, serine 108, 113–115, and glutamine 119; these read TCNR and EPQ. The Nucleophile role is filled by cysteine 50. An NADP(+)-binding site is contributed by 188–193; sequence GAGETI.

The protein belongs to the glutamyl-tRNA reductase family. In terms of assembly, homodimer.

It carries out the reaction (S)-4-amino-5-oxopentanoate + tRNA(Glu) + NADP(+) = L-glutamyl-tRNA(Glu) + NADPH + H(+). It participates in porphyrin-containing compound metabolism; protoporphyrin-IX biosynthesis; 5-aminolevulinate from L-glutamyl-tRNA(Glu): step 1/2. Its function is as follows. Catalyzes the NADPH-dependent reduction of glutamyl-tRNA(Glu) to glutamate 1-semialdehyde (GSA). The chain is Glutamyl-tRNA reductase from Aliivibrio fischeri (strain ATCC 700601 / ES114) (Vibrio fischeri).